Reading from the N-terminus, the 258-residue chain is NAD kinase (258 aa).

The active-site Proton acceptor is D51. NAD(+) contacts are provided by residues 51-52 (DG), K56, 119-120 (ND), K130, D149, 160-165 (TAYSLS), and A184.

It belongs to the NAD kinase family. A divalent metal cation serves as cofactor.

Its subcellular location is the cytoplasm. It catalyses the reaction NAD(+) + ATP = ADP + NADP(+) + H(+). In terms of biological role, involved in the regulation of the intracellular balance of NAD and NADP, and is a key enzyme in the biosynthesis of NADP. Catalyzes specifically the phosphorylation on 2'-hydroxyl of the adenosine moiety of NAD to yield NADP. The polypeptide is NAD kinase (Thermotoga sp. (strain RQ2)).